A 593-amino-acid chain; its full sequence is Proline--tRNA ligase (593 aa).

The protein belongs to the class-II aminoacyl-tRNA synthetase family. ProS type 1 subfamily. In terms of assembly, homodimer.

It localises to the cytoplasm. The enzyme catalyses tRNA(Pro) + L-proline + ATP = L-prolyl-tRNA(Pro) + AMP + diphosphate. Catalyzes the attachment of proline to tRNA(Pro) in a two-step reaction: proline is first activated by ATP to form Pro-AMP and then transferred to the acceptor end of tRNA(Pro). As ProRS can inadvertently accommodate and process non-cognate amino acids such as alanine and cysteine, to avoid such errors it has two additional distinct editing activities against alanine. One activity is designated as 'pretransfer' editing and involves the tRNA(Pro)-independent hydrolysis of activated Ala-AMP. The other activity is designated 'posttransfer' editing and involves deacylation of mischarged Ala-tRNA(Pro). The misacylated Cys-tRNA(Pro) is not edited by ProRS. This is Proline--tRNA ligase from Synechococcus sp. (strain CC9605).